Here is a 51-residue protein sequence, read N- to C-terminus: Basic phospholipase A2 Bfon11 (51 aa).

The Ca(2+) site is built by Y27, G29, and G31. C28 and C43 form a disulfide bridge. H46 is a catalytic residue. D47 serves as a coordination point for Ca(2+).

The protein belongs to the phospholipase A2 family. Group II subfamily. D49 sub-subfamily. It depends on Ca(2+) as a cofactor. As to expression, expressed by the venom gland.

It localises to the secreted. It carries out the reaction a 1,2-diacyl-sn-glycero-3-phosphocholine + H2O = a 1-acyl-sn-glycero-3-phosphocholine + a fatty acid + H(+). Functionally, snake venom phospholipase A2 (PLA2) that impairs hemostasis. PLA2 catalyzes the calcium-dependent hydrolysis of the 2-acyl groups in 3-sn-phosphoglycerides. This Bothrops fonsecai (Fonseca's lancehead) protein is Basic phospholipase A2 Bfon11.